The primary structure comprises 338 residues: Glycerol-3-phosphate dehydrogenase [NAD(P)+] (338 aa).

The NADPH site is built by Ser-13, Trp-14, and Lys-108. Sn-glycerol 3-phosphate is bound by residues Lys-108, Gly-139, and Ser-141. Ala-143 serves as a coordination point for NADPH. Residues Lys-194, Asp-247, Ser-257, Arg-258, and Asn-259 each contribute to the sn-glycerol 3-phosphate site. Catalysis depends on Lys-194, which acts as the Proton acceptor. Arg-258 contributes to the NADPH binding site. Residues Val-282 and Glu-284 each contribute to the NADPH site.

It belongs to the NAD-dependent glycerol-3-phosphate dehydrogenase family.

It is found in the cytoplasm. The enzyme catalyses sn-glycerol 3-phosphate + NAD(+) = dihydroxyacetone phosphate + NADH + H(+). It carries out the reaction sn-glycerol 3-phosphate + NADP(+) = dihydroxyacetone phosphate + NADPH + H(+). It participates in membrane lipid metabolism; glycerophospholipid metabolism. Catalyzes the reduction of the glycolytic intermediate dihydroxyacetone phosphate (DHAP) to sn-glycerol 3-phosphate (G3P), the key precursor for phospholipid synthesis. This Streptococcus pneumoniae serotype 19F (strain G54) protein is Glycerol-3-phosphate dehydrogenase [NAD(P)+].